We begin with the raw amino-acid sequence, 266 residues long: Ras-like protein family member 12 (266 aa).

GTP-binding positions include 27-34 (GRRGAGKS), 74-78 (DTADL), and 134-137 (NKLD).

This sequence belongs to the small GTPase superfamily. Ras family.

It catalyses the reaction GTP + H2O = GDP + phosphate + H(+). This is Ras-like protein family member 12 (RASL12) from Bos taurus (Bovine).